The sequence spans 284 residues: Glutamate 5-kinase 2 (284 aa).

Lys-26 serves as a coordination point for ATP. Substrate-binding residues include Ser-67, Asp-154, and Asn-166. ATP is bound by residues 186 to 187 (SD) and 228 to 234 (SGGMVTK).

Belongs to the glutamate 5-kinase family.

It localises to the cytoplasm. The catalysed reaction is L-glutamate + ATP = L-glutamyl 5-phosphate + ADP. It participates in amino-acid biosynthesis; L-proline biosynthesis; L-glutamate 5-semialdehyde from L-glutamate: step 1/2. Its function is as follows. Catalyzes the transfer of a phosphate group to glutamate to form L-glutamate 5-phosphate. This chain is Glutamate 5-kinase 2, found in Mesorhizobium japonicum (strain LMG 29417 / CECT 9101 / MAFF 303099) (Mesorhizobium loti (strain MAFF 303099)).